A 273-amino-acid polypeptide reads, in one-letter code: Putative pyruvate, phosphate dikinase regulatory protein (273 aa).

153–160 (GVSRTSKS) serves as a coordination point for ADP.

This sequence belongs to the pyruvate, phosphate/water dikinase regulatory protein family. PDRP subfamily.

The enzyme catalyses N(tele)-phospho-L-histidyl/L-threonyl-[pyruvate, phosphate dikinase] + ADP = N(tele)-phospho-L-histidyl/O-phospho-L-threonyl-[pyruvate, phosphate dikinase] + AMP + H(+). The catalysed reaction is N(tele)-phospho-L-histidyl/O-phospho-L-threonyl-[pyruvate, phosphate dikinase] + phosphate + H(+) = N(tele)-phospho-L-histidyl/L-threonyl-[pyruvate, phosphate dikinase] + diphosphate. Functionally, bifunctional serine/threonine kinase and phosphorylase involved in the regulation of the pyruvate, phosphate dikinase (PPDK) by catalyzing its phosphorylation/dephosphorylation. This is Putative pyruvate, phosphate dikinase regulatory protein from Ehrlichia ruminantium (strain Welgevonden).